A 299-amino-acid chain; its full sequence is 4-diphosphocytidyl-2-C-methyl-D-erythritol kinase (299 aa).

Residue Lys-33 is part of the active site. Residue 115–125 participates in ATP binding; it reads PLASGLGGGSS. Asp-154 is an active-site residue.

This sequence belongs to the GHMP kinase family. IspE subfamily.

The enzyme catalyses 4-CDP-2-C-methyl-D-erythritol + ATP = 4-CDP-2-C-methyl-D-erythritol 2-phosphate + ADP + H(+). It participates in isoprenoid biosynthesis; isopentenyl diphosphate biosynthesis via DXP pathway; isopentenyl diphosphate from 1-deoxy-D-xylulose 5-phosphate: step 3/6. Catalyzes the phosphorylation of the position 2 hydroxy group of 4-diphosphocytidyl-2C-methyl-D-erythritol. The protein is 4-diphosphocytidyl-2-C-methyl-D-erythritol kinase of Deinococcus geothermalis (strain DSM 11300 / CIP 105573 / AG-3a).